A 1042-amino-acid polypeptide reads, in one-letter code: Putative type I restriction enzyme MjaIXP endonuclease subunit (1042 aa).

One can recognise a Helicase ATP-binding domain in the interval 323 to 487 (GETPEDRRIG…FLVFGDYISA (165 aa)). Positions 439 to 442 (DEAH) match the DEAH box motif. The 181-residue stretch at 551–731 (LTEDYLSKVS…DIKVVIEEMK (181 aa)) folds into the Helicase C-terminal domain.

The protein belongs to the HsdR family. In terms of assembly, the type I restriction/modification system is composed of three polypeptides R, M and S.

The catalysed reaction is Endonucleolytic cleavage of DNA to give random double-stranded fragments with terminal 5'-phosphates, ATP is simultaneously hydrolyzed.. Its function is as follows. The restriction (R) subunit of a type I restriction enzyme that recognizes 5'-CCAN(5)GTR-3' and cleaves a random distance away. The R subunit is required for both nuclease and ATPase activities, but not for modification. After locating a non-methylated recognition site, the enzyme complex serves as a molecular motor that translocates DNA in an ATP-dependent manner until a collision occurs that triggers cleavage. In Methanocaldococcus jannaschii (strain ATCC 43067 / DSM 2661 / JAL-1 / JCM 10045 / NBRC 100440) (Methanococcus jannaschii), this protein is Putative type I restriction enzyme MjaIXP endonuclease subunit.